The chain runs to 241 residues: Chalcone--flavanone isomerase C (241 aa).

Substrate contacts are provided by T50, N115, and S192.

The protein belongs to the chalcone isomerase family.

The catalysed reaction is a chalcone = a flavanone.. It participates in secondary metabolite biosynthesis; flavonoid biosynthesis. In terms of biological role, catalyzes the intramolecular cyclization of bicyclic chalcones into tricyclic (S)-flavanones. Responsible for the isomerization of 4,2',4',6'-tetrahydroxychalcone (also termed chalcone) into naringenin. The polypeptide is Chalcone--flavanone isomerase C (CHI3) (Petunia hybrida (Petunia)).